A 41-amino-acid chain; its full sequence is Diuretic hormone 1 (41 aa).

I41 carries the post-translational modification Isoleucine amide.

Its subcellular location is the secreted. Regulation of fluid secretion. May stimulate primary urine secretion by Malpighian tubules and causes a dose-dependent stimulation of cAMP levels in the tubules. The protein is Diuretic hormone 1 of Hyles lineata (White-lined sphinx moth).